The sequence spans 741 residues: MNRVTTESIASTAILVVMVFLFSWRSIEAANVSYDHRSLTIGNRRQLIISAAIHYPRSVPAMWPSLVQTAKEGGCNAIESYVFWNGHEPSPGKYYFGGRYNIVKFIKIVQQAGMHMILRIGPFVAAEWNYGGVPVWLHYVPGTVFRADNEPWKHYMESFTTYIVNLLKQEKLFAPQGGPIILSQVENEYGYYEKDYGEGGKRYAQWSASMAVSQNIGVPWMMCQQWDAPPTVISTCNGFYCDQFTPNTPDKPKIWTENWPGWFKTFGGRDPHRPAEDVAYSVARFFGKGGSVHNYYMYHGGTNFGRTSGGPFITTSYDYEAPIDEYGLPRLPKWGHLKDLHKAIMLSENLLISGEHQNFTLGHSLEADVYTDSSGTCAAFLSNLDDKNDKAVMFRNTSYHLPAWSVSILPDCKTEVFNTAKVTSKSSKVEMLPEDLKSSSGLKWEVFSEKPGIWGAADFVKNELVDHINTTKDTTDYLWYTTSITVSENEAFLKKGSSPVLFIESKGHTLHVFINKEYLGTATGNGTHVPFKLKKPVALKAGENNIDLLSMTVGLANAGSFYEWVGAGLTSVSIKGFNKGTLNLTNSKWSYKLGVEGEHLELFKPGNSGAVKWTVTTKPPKKQPLTWYKVVIEPPSGSEPVGLDMISMGKGMAWLNGEEIGRYWPRIARKNSPNDECVKECDYRGKFMPDKCLTGCGEPSQRWYHVPRSWFKSSGNELVIFEEKGGNPMKIKLSKRKVSVV.

An N-terminal signal peptide occupies residues 1–29; sequence MNRVTTESIASTAILVVMVFLFSWRSIEA. Asparagine 31 is a glycosylation site (N-linked (GlcNAc...) asparagine). The Proton donor role is filled by glutamate 188. Residue glutamate 257 is the Nucleophile of the active site. N-linked (GlcNAc...) asparagine glycosylation is found at asparagine 358, asparagine 396, asparagine 469, asparagine 525, and asparagine 583.

Belongs to the glycosyl hydrolase 35 family. Ubiquitous.

The protein resides in the secreted. It localises to the extracellular space. The protein localises to the apoplast. The enzyme catalyses Hydrolysis of terminal non-reducing beta-D-galactose residues in beta-D-galactosides.. The chain is Beta-galactosidase 10 (BGAL10) from Arabidopsis thaliana (Mouse-ear cress).